The sequence spans 711 residues: Forkhead box protein P1 (711 aa).

Residues 1 to 19 are compositionally biased toward polar residues; the sequence is MMQESGSEAKSNGSTIQNG. The interval 1-41 is disordered; it reads MMQESGSEAKSNGSTIQNGSSGGNHLLECGTLRDTRSNGEA. Phosphoserine is present on serine 115. 2 disordered regions span residues 273 to 292 and 305 to 332; these read HTAEETTGSNHSSLDLTSTC and MNPHASTNGQLSVHTPKRESLSHEEHPH. The segment covering 305 to 317 has biased composition (polar residues); that stretch reads MNPHASTNGQLSV. The span at 320 to 332 shows a compositional bias: basic and acidic residues; it reads PKRESLSHEEHPH. Residue lysine 321 forms a Glycyl lysine isopeptide (Lys-Gly) (interchain with G-Cter in SUMO2) linkage. A C2H2-type zinc finger spans residues 340-365; the sequence is GVCKWPGCEAVCDDFPAFLKHLNSEH. The tract at residues 382–403 is leucine-zipper; the sequence is VQQLELQLAKDKERLQAMMTHL. Residues lysine 406 and lysine 411 each participate in a glycyl lysine isopeptide (Lys-Gly) (interchain with G-Cter in SUMO2) cross-link. The segment at 416-420 is CTBP1-binding; that stretch reads PLNLV. The segment covering 424–437 has biased composition (polar residues); it reads TLSKSASEASPQSL. A disordered region spans residues 424–456; sequence TLSKSASEASPQSLPHTPTTPTAPLTPVTQGPS. Over residues 438-452 the composition is skewed to low complexity; sequence PHTPTTPTAPLTPVT. A Glycyl lysine isopeptide (Lys-Gly) (interchain with G-Cter in SUMO2) cross-link involves residue lysine 476. A DNA-binding region (fork-head) is located at residues 499-589; it reads RPPFTYASLI…PQKISGNPSL (91 aa). The disordered stretch occupies residues 645–711; the sequence is EHTNSNESDS…EDEPVNEDME (67 aa). Residues 646–657 show a composition bias toward polar residues; sequence HTNSNESDSSPG. The residue at position 687 (threonine 687) is a Phosphothreonine. Serine 692 bears the Phosphoserine mark. Residues 701-711 are compositionally biased toward acidic residues; the sequence is YEDEPVNEDME.

Forms homodimers and heterodimers with FOXP2 and FOXP4. Dimerization is required for DNA-binding. Self-associates. Interacts with CTBP1. Interacts with NCOR2 and AR. Interacts with FOXP2. Interacts with TBR1. Interacts with AURKA; this interaction facilitates the phosphorylation of FOXP1, which suppresses the expression of FBXL7. Interacts with ZMYM2.

It is found in the nucleus. In terms of biological role, transcriptional repressor. Can act with CTBP1 to synergistically repress transcription but CTPBP1 is not essential. Plays an important role in the specification and differentiation of lung epithelium. Acts cooperatively with FOXP4 to regulate lung secretory epithelial cell fate and regeneration by restricting the goblet cell lineage program; the function may involve regulation of AGR2. Essential transcriptional regulator of B-cell development. Involved in regulation of cardiac muscle cell proliferation. Involved in the columnar organization of spinal motor neurons. Promotes the formation of the lateral motor neuron column (LMC) and the preganglionic motor column (PGC) and is required for respective appropriate motor axon projections. The segment-appropriate generation of spinal cord motor columns requires cooperation with other Hox proteins. Can regulate PITX3 promoter activity; may promote midbrain identity in embryonic stem cell-derived dopamine neurons by regulating PITX3. Negatively regulates the differentiation of T follicular helper cells T(FH)s. Involved in maintenance of hair follicle stem cell quiescence; the function probably involves regulation of FGF18. Represses transcription of various pro-apoptotic genes and cooperates with NF-kappa B-signaling in promoting B-cell expansion by inhibition of caspase-dependent apoptosis. Binds to CSF1R promoter elements and is involved in regulation of monocyte differentiation and macrophage functions; repression of CSF1R in monocytes seems to involve NCOR2 as corepressor. Involved in endothelial cell proliferation, tube formation and migration indicative for a role in angiogenesis; the role in neovascularization seems to implicate suppression of SEMA5B. Can negatively regulate androgen receptor signaling. Acts as a transcriptional activator of the FBXL7 promoter; this activity is regulated by AURKA. This is Forkhead box protein P1 (Foxp1) from Rattus norvegicus (Rat).